Consider the following 234-residue polypeptide: Large ribosomal subunit protein uL1 (234 aa).

The protein belongs to the universal ribosomal protein uL1 family. Part of the 50S ribosomal subunit.

Functionally, binds directly to 23S rRNA. The L1 stalk is quite mobile in the ribosome, and is involved in E site tRNA release. Its function is as follows. Protein L1 is also a translational repressor protein, it controls the translation of the L11 operon by binding to its mRNA. The protein is Large ribosomal subunit protein uL1 of Desulfatibacillum aliphaticivorans.